The sequence spans 340 residues: tRNA N6-adenosine threonylcarbamoyltransferase (340 aa).

2 residues coordinate Fe cation: His115 and His119. Substrate contacts are provided by residues 138–142, Asp171, Gly184, Asp188, and Asn278; that span reads VVSGG. Residue Asp306 coordinates Fe cation.

Belongs to the KAE1 / TsaD family. Fe(2+) serves as cofactor.

The protein resides in the cytoplasm. The catalysed reaction is L-threonylcarbamoyladenylate + adenosine(37) in tRNA = N(6)-L-threonylcarbamoyladenosine(37) in tRNA + AMP + H(+). Its function is as follows. Required for the formation of a threonylcarbamoyl group on adenosine at position 37 (t(6)A37) in tRNAs that read codons beginning with adenine. Is involved in the transfer of the threonylcarbamoyl moiety of threonylcarbamoyl-AMP (TC-AMP) to the N6 group of A37, together with TsaE and TsaB. TsaD likely plays a direct catalytic role in this reaction. The polypeptide is tRNA N6-adenosine threonylcarbamoyltransferase (Clostridium botulinum (strain Kyoto / Type A2)).